Here is a 429-residue protein sequence, read N- to C-terminus: MKASLEILKGLDRSLTVDLPIDIFNQKTDKILQKIASQVNFDGFRKGKVPVAVVRKRFGNNVNSDAINEIVNETLTDALTQVKATPVSQPVISKIDSEDEKNFSYTVDFEVFPEIKVADFSKLTIEQIKVEITKADEQRTLNGLKEQLTEYKAVKRKSEIGDRLSIDFKGLIDGKTFDGAEAKDFKIVLGKGSMIKGFEEGLIDVTPNSMLMLDLVFPKNYHMNKLSGKAVTFEININEVALPKEPKLNEVFAKKFGEKDMDALKVSIKMQMKVEIDGRIGYLNKNAIFDALSEANQFDVPQSSIDNEAQNLLKEMKERIQQQGGLPAQGEIPASAFNDEAQRRVKLGLLVNQISNDNKLSASLEQIDAKLQEISQAHGKDTQKIIDSYNQDPTKKLSIELLVIEKMVQDLILDKAKVTFKQKKFQEIT.

Positions 161–246 constitute a PPIase FKBP-type domain; sequence GDRLSIDFKG…INEVALPKEP (86 aa).

The protein belongs to the FKBP-type PPIase family. Tig subfamily.

The protein resides in the cytoplasm. It carries out the reaction [protein]-peptidylproline (omega=180) = [protein]-peptidylproline (omega=0). Involved in protein export. Acts as a chaperone by maintaining the newly synthesized protein in an open conformation. Functions as a peptidyl-prolyl cis-trans isomerase. The sequence is that of Trigger factor from Ruthia magnifica subsp. Calyptogena magnifica.